The primary structure comprises 347 residues: 3-isopropylmalate dehydrogenase (347 aa).

Residue 76–87 participates in NAD(+) binding; it reads GPKWTDPNNRPE. Substrate is bound by residues R94, R104, R132, and D217. Mg(2+) contacts are provided by D217, D241, and D245. 275-287 serves as a coordination point for NAD(+); that stretch reads GSAPDIANEDKAN.

The protein belongs to the isocitrate and isopropylmalate dehydrogenases family. LeuB type 1 subfamily. Homodimer. It depends on Mg(2+) as a cofactor. Mn(2+) is required as a cofactor.

Its subcellular location is the cytoplasm. It catalyses the reaction (2R,3S)-3-isopropylmalate + NAD(+) = 4-methyl-2-oxopentanoate + CO2 + NADH. It participates in amino-acid biosynthesis; L-leucine biosynthesis; L-leucine from 3-methyl-2-oxobutanoate: step 3/4. Catalyzes the oxidation of 3-carboxy-2-hydroxy-4-methylpentanoate (3-isopropylmalate) to 3-carboxy-4-methyl-2-oxopentanoate. The product decarboxylates to 4-methyl-2 oxopentanoate. The polypeptide is 3-isopropylmalate dehydrogenase (Staphylococcus epidermidis (strain ATCC 12228 / FDA PCI 1200)).